The following is a 688-amino-acid chain: Nucleolar protein 10 (688 aa).

Residue methionine 1 is modified to N-acetylmethionine. Serine 25 carries the phosphoserine modification. 7 WD repeats span residues 44-82 (ELIQDFEMPTVCTTIKVSKDGQYILATGTYKPRVRCYDT), 88-124 (KFERCLDSEVVTFEILSDDYSKIVFLHNDRYIEFHSQ), 127-163 (FYYKTRIPKFGRDFSYHYPSCDLYFVGASSEVYRLNL), 170-205 (NPLQTDAAENNVCDINSVHGLFATGTIEGRVECWDP), 219-258 (NSVTADSEINSLPTISALKFNGALTMAVGTTTGQVLLYDL), 262-300 (KPLLVKDHQYGLPIKSVHFQDSLDLILSADSRIVKMWNK), and 304-341 (KIFTSLEPEHDLNDVCLYPNSGMLLTANETPKMGIYYI). Positions 423–446 (EYRKDKIRQKIEETRAQRVQLKKL) form a coiled coil. Position 475 is a phosphoserine (serine 475). Threonine 481 is subject to Phosphothreonine. Serine 514 is modified (phosphoserine). Coiled-coil stretches lie at residues 514–589 (SEKR…TVLK) and 640–673 (SKQLTFTLKRSEQQKKQQEAEKLHRQERKRLRRS). 2 disordered regions span residues 529–557 (LREKEEEEEPEGKPSDAESSESSDDEKAW) and 645–688 (FTLK…RSFH). Basic and acidic residues predominate over residues 648–663 (KRSEQQKKQQEAEKLH). Residues 664-688 (RQERKRLRRSAGHLKSRHKRGRSFH) show a composition bias toward basic residues.

Belongs to the WD repeat NOL10/ENP2 family.

The protein localises to the nucleus. It is found in the nucleolus. In Homo sapiens (Human), this protein is Nucleolar protein 10 (NOL10).